The chain runs to 237 residues: Ribonuclease PH (237 aa).

Phosphate is bound by residues Arg86 and 124–126; that span reads GTR.

Belongs to the RNase PH family. In terms of assembly, homohexameric ring arranged as a trimer of dimers.

It carries out the reaction tRNA(n+1) + phosphate = tRNA(n) + a ribonucleoside 5'-diphosphate. Its function is as follows. Phosphorolytic 3'-5' exoribonuclease that plays an important role in tRNA 3'-end maturation. Removes nucleotide residues following the 3'-CCA terminus of tRNAs; can also add nucleotides to the ends of RNA molecules by using nucleoside diphosphates as substrates, but this may not be physiologically important. Probably plays a role in initiation of 16S rRNA degradation (leading to ribosome degradation) during starvation. The sequence is that of Ribonuclease PH from Shewanella frigidimarina (strain NCIMB 400).